The primary structure comprises 660 residues: Acyl-coenzyme A oxidase acox-1.3 (660 aa).

FAD is bound by residues tyrosine 146–threonine 149, glycine 154–threonine 155, and glycine 188. Residues lysine 282–tyrosine 285 and arginine 292 contribute to the substrate site. FAD is bound by residues arginine 317 and glutamine 337 to arginine 340. Histidine 339, serine 389, histidine 393, and glutamine 401 together coordinate ATP. Substrate is bound at residue tyrosine 430–glutamate 431. The active-site Proton acceptor is the glutamate 431. FAD is bound at residue glutamate 433. ATP contacts are provided by residues arginine 524–arginine 527 and tyrosine 572. The Microbody targeting signal motif lies at alanine 658–leucine 660.

It belongs to the acyl-CoA oxidase family. Forms a heterodimer with acox-1.1; the interaction may be important for the stability of acox-1.3. The cofactor is FAD.

The protein localises to the peroxisome. It catalyses the reaction asc-C7-CoA + O2 = asc-DeltaC7-CoA + H2O2. The protein operates within lipid metabolism; peroxisomal fatty acid beta-oxidation. Its activity is regulated as follows. Activated by ATP. ATP binding leads to a conformational change that promotes FAD cofactor binding and enzyme activity. ATP binding likely occurs during acox-1.3 folding and/or dimer formation. Functionally, involved in the first step of peroxisomal beta-oxidation by catalyzing the desaturation of fatty acid-derived side chains of ascaroside pheromones, which regulates development and behavior. Specifically, shortens ascarosides with a 7-carbon side chain (asc-C7). Does not catalyze the desaturation of fatty acids or hydroxylated fatty acids. Involved in the biosynthesis of asc-C6-MK (daumone 2) and asc-delta-C9 (daumone 3) but not asc-C7 (daumone 1); daumones are pheromones produced during unfavourable growth conditions which promote entry into the dauer stage. The polypeptide is Acyl-coenzyme A oxidase acox-1.3 (Caenorhabditis elegans).